The chain runs to 207 residues: Protein lin-7 homolog B (207 aa).

The Kinase interacting site signature appears at 1 to 13 (MAALVEPLGLERD). Residues 10 to 65 (LERDVSRAVELLERLQRSGELPPQKLQALQRVLQSRFCSAIREVYEQLYDTLDITG) form the L27 domain. One can recognise a PDZ domain in the interval 93-175 (VVELPKTDEG…SVKLVVRYTP (83 aa)). The disordered stretch occupies residues 187–207 (KMRSARRRQQHHSYSSLESRG). A compositionally biased stretch (polar residues) spans 198–207 (HSYSSLESRG).

The protein belongs to the lin-7 family. Forms two exclusive ternary complexes with CASK and CASKIN1. The brain-specific heterotrimeric complex (LIN-10-LIN-2-LIN-7 complex) composed of at least APBA1, CASK, and LIN7, associates with the motor protein KIF17 to transport vesicles along microtubules. Forms a heterotrimeric complex composed of MMP5, LIN7B and PATJ; the N-terminal L27 domain of PALS1 interacts with the L27 domain of PATJ and the C-terminal L27 domain of PALS1 interacts with the L27 domain of LIN7B. Forms a heterotrimeric complex with DLG1 and CASK via their L27 domains. Interacts with DLG4 and GRIN2B as well as CDH1 and CTNNB1, the channels KCNJ12/Kir2.2, KCNJ4/Kir2.3 and probably KCNJ2/Kir2.1 and SLC6A12/BGT-1 via its PDZ domain. The association of LIN7A with cadherin and beta-catenin is calcium-dependent, occurs at synaptic junctions and requires the actin cytoskeleton. Interacts with EGFR, ERBB2, ERBB3 and ERBB4 with both PDZ and KID domains. Associates with KIF17 via APBA1. Interacts with ASIC3. Interacts with TOPK. Interacts with RTKN. Interacts with APBA1. Interacts with MPP7. Interacts with DLG2. Interacts with DLG3. As to expression, expressed only in brain.

The protein localises to the cell membrane. The protein resides in the basolateral cell membrane. Its subcellular location is the cell junction. It is found in the postsynaptic density membrane. It localises to the tight junction. Functionally, plays a role in establishing and maintaining the asymmetric distribution of channels and receptors at the plasma membrane of polarized cells. Forms membrane-associated multiprotein complexes that may regulate delivery and recycling of proteins to the correct membrane domains. The tripartite complex composed of LIN7 (LIN7A, LIN7B or LIN7C), CASK and APBA1 associates with the motor protein KIF17 to transport vesicles containing N-methyl-D-aspartate (NMDA) receptor subunit NR2B along microtubules. This complex may have the potential to couple synaptic vesicle exocytosis to cell adhesion in brain. Ensures the proper localization of GRIN2B (subunit 2B of the NMDA receptor) to neuronal postsynaptic density and may function in localizing synaptic vesicles at synapses where it is recruited by beta-catenin and cadherin. Required to localize Kir2 channels, GABA transporter (SLC6A12) and EGFR/ERBB1, ERBB2, ERBB3 and ERBB4 to the basolateral membrane of epithelial cells. May increase the amplitude of ASIC3 acid-evoked currents by stabilizing the channel at the cell surface. The chain is Protein lin-7 homolog B (Lin7b) from Rattus norvegicus (Rat).